Reading from the N-terminus, the 931-residue chain is Dipeptidyl aminopeptidase A (931 aa).

Residues 1–13 (MSASTHSHKRKNS) show a composition bias toward basic residues. A disordered region spans residues 1-58 (MSASTHSHKRKNSHLFPQRKSSNSSMDKPFFPNNDSVANTDPQSNENGHTINEIRPTE). The Cytoplasmic segment spans residues 1–119 (MSASTHSHKR…GEWSLPEKRS (119 aa)). A compositionally biased stretch (polar residues) spans 33-50 (NNDSVANTDPQSNENGHT). A helical; Signal-anchor for type II membrane protein membrane pass occupies residues 120–140 (YVLVFTLIALSVLVLLVILIP). Residues 141-931 (SKLLPTKITR…RFDNTEVLHL (791 aa)) are Lumenal-facing. Asn377 carries N-linked (GlcNAc...) asparagine glycosylation. Ser785 functions as the Charge relay system in the catalytic mechanism. The N-linked (GlcNAc...) asparagine glycan is linked to Asn814. Active-site charge relay system residues include Asp863 and His896.

Belongs to the peptidase S9B family.

The protein resides in the vacuole membrane. Its function is as follows. Responsible for the proteolytic maturation of the alpha-factor precursor. This chain is Dipeptidyl aminopeptidase A (STE13), found in Saccharomyces cerevisiae (strain ATCC 204508 / S288c) (Baker's yeast).